We begin with the raw amino-acid sequence, 506 residues long: Maturase K (506 aa).

Belongs to the intron maturase 2 family. MatK subfamily.

Its subcellular location is the plastid. It is found in the chloroplast. Functionally, usually encoded in the trnK tRNA gene intron. Probably assists in splicing its own and other chloroplast group II introns. The protein is Maturase K of Lathyrus sativus (White vetchling).